Reading from the N-terminus, the 162-residue chain is Endoribonuclease YbeY (162 aa).

Zn(2+)-binding residues include H128, H132, and H138.

Belongs to the endoribonuclease YbeY family. It depends on Zn(2+) as a cofactor.

It is found in the cytoplasm. Functionally, single strand-specific metallo-endoribonuclease involved in late-stage 70S ribosome quality control and in maturation of the 3' terminus of the 16S rRNA. In Lactococcus lactis subsp. cremoris (strain MG1363), this protein is Endoribonuclease YbeY.